The primary structure comprises 181 residues: ATP-dependent protease subunit HslV (181 aa).

Residue threonine 8 is part of the active site. Na(+) contacts are provided by glycine 165, cysteine 168, and threonine 171.

It belongs to the peptidase T1B family. HslV subfamily. As to quaternary structure, a double ring-shaped homohexamer of HslV is capped on each side by a ring-shaped HslU homohexamer. The assembly of the HslU/HslV complex is dependent on binding of ATP.

It localises to the cytoplasm. It carries out the reaction ATP-dependent cleavage of peptide bonds with broad specificity.. Its activity is regulated as follows. Allosterically activated by HslU binding. In terms of biological role, protease subunit of a proteasome-like degradation complex believed to be a general protein degrading machinery. This is ATP-dependent protease subunit HslV from Oceanobacillus iheyensis (strain DSM 14371 / CIP 107618 / JCM 11309 / KCTC 3954 / HTE831).